The sequence spans 314 residues: MIKVVFMGTPDFSVPVLRRLIEDGYDVIGVVTQPDRPVGRKKVLTPTPVKVEAEKHGIPVLQPLRIREKDEYEKVLALEPDLIVTAAFGQIVPNEILEAPKYGCINVHASLLPELRGGAPIHYAIMEGKEKTGITIMYMVEKLDAGDILTQVEVEIEERETTGSLFDKLSEAGAHLLSKTVPLLIQGKLEPIKQNEEEVTFAYNIKREQEKIDWTKTGEEVYNHIRGLNPWPVAYTTLAGQVVKVWWGEKVPVTKSAEAGTIVAIEEDGFVVATGNETGVKITELQPSGKKRMSCSQFLRGTKPEIGTKLGENA.

Position 110 to 113 (110 to 113 (SLLP)) interacts with (6S)-5,6,7,8-tetrahydrofolate.

This sequence belongs to the Fmt family.

The catalysed reaction is L-methionyl-tRNA(fMet) + (6R)-10-formyltetrahydrofolate = N-formyl-L-methionyl-tRNA(fMet) + (6S)-5,6,7,8-tetrahydrofolate + H(+). Functionally, attaches a formyl group to the free amino group of methionyl-tRNA(fMet). The formyl group appears to play a dual role in the initiator identity of N-formylmethionyl-tRNA by promoting its recognition by IF2 and preventing the misappropriation of this tRNA by the elongation apparatus. This is Methionyl-tRNA formyltransferase from Bacillus anthracis (strain A0248).